We begin with the raw amino-acid sequence, 803 residues long: Integrin beta-1 (803 aa).

Residues 1–24 form the signal peptide; sequence MAETNLTLLTWAGILCCLIWSGSA. Residue glutamine 25 is modified to Blocked amino end (Gln). The Extracellular portion of the chain corresponds to 25 to 733; sequence QQGGSDCIKA…ETPECPSGPD (709 aa). Residues 30–80 enclose the PSI domain; sequence DCIKANAKSCGECIQAGPNCGWCKKTDFLQEGEPTSARCDDLAALKSKGCP. 22 disulfide bridges follow: cysteine 31–cysteine 49, cysteine 39–cysteine 469, cysteine 42–cysteine 68, cysteine 52–cysteine 79, cysteine 211–cysteine 217, cysteine 265–cysteine 305, cysteine 405–cysteine 419, cysteine 439–cysteine 467, cysteine 471–cysteine 491, cysteine 482–cysteine 494, cysteine 496–cysteine 505, cysteine 507–cysteine 538, cysteine 521–cysteine 536, cysteine 530–cysteine 541, cysteine 543–cysteine 558, cysteine 560–cysteine 581, cysteine 565–cysteine 579, cysteine 573–cysteine 584, cysteine 586–cysteine 595, cysteine 597–cysteine 620, cysteine 604–cysteine 618, and cysteine 612–cysteine 623. In terms of domain architecture, VWFA spans 144-382; it reads DYPIDLYYLM…QLIIDAYNSL (239 aa). Mg(2+) contacts are provided by serine 156 and serine 158. The Ca(2+) site is built by serine 158, aspartate 161, aspartate 162, and glutamate 193. The tract at residues 211–217 is CX3CL1-binding; sequence CTGDQNC. A glycan (N-linked (GlcNAc...) asparagine) is linked at asparagine 216. The Ca(2+) site is built by asparagine 248, aspartate 250, proline 252, and glutamate 253. Glutamate 253 lines the Mg(2+) pocket. N-linked (GlcNAc...) asparagine glycosylation is present at asparagine 273. The tract at residues 299–318 is CX3CL1-binding; that stretch reads LPNDGKCHLENNMYTMSHYY. 6 N-linked (GlcNAc...) asparagine glycosylation sites follow: asparagine 367, asparagine 410, asparagine 421, asparagine 433, asparagine 445, and asparagine 486. The interval 387 to 470 is interaction with TMEM182; sequence ILENSKLPKE…IHLQFICDCL (84 aa). 4 consecutive I-EGF domains span residues 471–506, 507–559, 560–596, and 597–636; these read CQSE…RLCE, CSTD…KYCE, CDNF…SACD, and CSLD…PTCE. An N-linked (GlcNAc...) asparagine glycan is attached at asparagine 525. The N-linked (GlcNAc...) asparagine glycan is linked to asparagine 589. N-linked (GlcNAc...) asparagine glycosylation occurs at asparagine 624. 6 cysteine pairs are disulfide-bonded: cysteine 625–cysteine 635, cysteine 638–cysteine 641, cysteine 645–cysteine 696, cysteine 651–cysteine 670, cysteine 654–cysteine 666, and cysteine 704–cysteine 728. Asparagine 674 carries an N-linked (GlcNAc...) asparagine glycan. A helical transmembrane segment spans residues 734–756; sequence IIPIVAGVVAGIVLIGLALLLIW. Residues 757 to 803 are Cytoplasmic-facing; that stretch reads KLLMIIHDRREFAKFEKEKMNAKWDTGENPIYKSAVTTVVNPKYEGK. Tyrosine 788 bears the Phosphotyrosine; by Tyr-kinases mark.

This sequence belongs to the integrin beta chain family. Heterodimer of an alpha and a beta subunit. Beta-1 associates with either alpha-1, alpha-2, alpha-3, alpha-4, alpha-5, alpha-6, alpha-7, alpha-8, alpha-9, alpha-10, alpha-11 or alpha-V. Interacts with TMEM182 and LAMB1. Expressed on surface of embryonic fibroblasts (at protein level).

The protein localises to the cell membrane. The protein resides in the cell projection. It localises to the invadopodium membrane. It is found in the ruffle membrane. Its subcellular location is the melanosome. The protein localises to the lamellipodium. The protein resides in the ruffle. It localises to the cell junction. It is found in the focal adhesion. Its function is as follows. Integrins alpha-1/beta-1, alpha-2/beta-1, alpha-10/beta-1 and alpha-11/beta-1 are receptors for collagen. Integrins alpha-1/beta-1 and alpha-2/beta-1 recognize the proline-hydroxylated sequence G-F-P-G-E-R in collagen. Integrins alpha-2/beta-1, alpha-3/beta-1, alpha-4/beta-1, alpha-5/beta-1, alpha-8/beta-1, alpha-10/beta-1, alpha-11/beta-1 and alpha-V/beta-1 are receptors for fibronectin. Alpha-4/beta-1 recognizes one or more domains within the alternatively spliced CS-1 and CS-5 regions of fibronectin. Integrin alpha-5/beta-1 is a receptor for fibrinogen. Integrin alpha-1/beta-1, alpha-2/beta-1, alpha-6/beta-1 and alpha-7/beta-1 are receptors for lamimin. Integrin alpha-6/beta-1 (ITGA6:ITGB1) is present in oocytes and is involved in sperm-egg fusion. Integrin alpha-4/beta-1 is a receptor for VCAM1 and recognizes the sequence Q-I-D-S in VCAM1. Integrin alpha-9/beta-1 is a receptor for VCAM1, cytotactin and osteopontin. It recognizes the sequence A-E-I-D-G-I-E-L in cytotactin. Integrin alpha-3/beta-1 is a receptor for epiligrin, thrombospondin and CSPG4. Integrin alpha-3/beta-1 provides a docking site for FAP (seprase) at invadopodia plasma membranes in a collagen-dependent manner and hence may participate in the adhesion, formation of invadopodia and matrix degradation processes, promoting cell invasion. Alpha-3/beta-1 may mediate with LGALS3 the stimulation by CSPG4 of endothelial cells migration. Integrin alpha-V/beta-1 is a receptor for vitronectin. Beta-1 integrins recognize the sequence R-G-D in a wide array of ligands. When associated with alpha-7/beta-1 integrin, regulates cell adhesion and laminin matrix deposition. Involved in promoting endothelial cell motility and angiogenesis. Involved in osteoblast compaction through the fibronectin fibrillogenesis cell-mediated matrix assembly process and the formation of mineralized bone nodules. May be involved in up-regulation of the activity of kinases such as PKC via binding to KRT1. Together with KRT1 and RACK1, serves as a platform for SRC activation or inactivation. ITGA4:ITGB1 binds to fractalkine (CX3CL1) and may act as its coreceptor in CX3CR1-dependent fractalkine signaling. ITGA4:ITGB1 and ITGA5:ITGB1 bind to PLA2G2A via a site (site 2) which is distinct from the classical ligand-binding site (site 1) and this induces integrin conformational changes and enhanced ligand binding to site 1. ITGA5:ITGB1 acts as a receptor for fibrillin-1 (FBN1) and mediates R-G-D-dependent cell adhesion to FBN1. ITGA5:ITGB1 acts as a receptor for fibronectin FN1 and mediates R-G-D-dependent cell adhesion to FN1. ITGA5:ITGB1 is a receptor for IL1B and binding is essential for IL1B signaling. ITGA5:ITGB3 is a receptor for soluble CD40LG and is required for CD40/CD40LG signaling. Plays an important role in myoblast differentiation and fusion during skeletal myogenesis. The chain is Integrin beta-1 (ITGB1) from Gallus gallus (Chicken).